A 157-amino-acid polypeptide reads, in one-letter code: Biotin carboxyl carrier protein of acetyl-CoA carboxylase (157 aa).

Positions Tyr80–Glu156 constitute a Biotinyl-binding domain. Lys122 carries the N6-biotinyllysine modification.

It is found in the plastid. The protein resides in the chloroplast. Its pathway is lipid metabolism; fatty acid biosynthesis. In terms of biological role, this protein is a component of the acetyl coenzyme A carboxylase complex; first, biotin carboxylase catalyzes the carboxylation of the carrier protein and then the transcarboxylase transfers the carboxyl group to form malonyl-CoA. This is Biotin carboxyl carrier protein of acetyl-CoA carboxylase (accB) from Porphyra purpurea (Red seaweed).